Reading from the N-terminus, the 400-residue chain is Acetylornithine aminotransferase (400 aa).

Pyridoxal 5'-phosphate contacts are provided by residues 113–114 and Phe139; that span reads GA. Arg142 is a N(2)-acetyl-L-ornithine binding site. 224 to 227 is a pyridoxal 5'-phosphate binding site; it reads DEVQ. Lys253 bears the N6-(pyridoxal phosphate)lysine mark. Ser281 contacts N(2)-acetyl-L-ornithine. A pyridoxal 5'-phosphate-binding site is contributed by Thr282.

Belongs to the class-III pyridoxal-phosphate-dependent aminotransferase family. ArgD subfamily. As to quaternary structure, homodimer. It depends on pyridoxal 5'-phosphate as a cofactor.

The protein resides in the cytoplasm. The catalysed reaction is N(2)-acetyl-L-ornithine + 2-oxoglutarate = N-acetyl-L-glutamate 5-semialdehyde + L-glutamate. Its pathway is amino-acid biosynthesis; L-arginine biosynthesis; N(2)-acetyl-L-ornithine from L-glutamate: step 4/4. The chain is Acetylornithine aminotransferase from Mycobacterium bovis (strain ATCC BAA-935 / AF2122/97).